Consider the following 718-residue polypeptide: Polyribonucleotide nucleotidyltransferase (718 aa).

The Mg(2+) site is built by Asp487 and Asp493. In terms of domain architecture, KH spans 554–613; it reads PRIETFKIPTDKIREVIGTGGKVIREIVEKTGAKVNIEDDGTVKVASSDGESIKAAIKWI. The S1 motif domain maps to 623 to 691; sequence GEIYEGTVVK…DRGKTRLSMK (69 aa). The interval 692 to 718 is disordered; that stretch reads VVDQETGEDLEAKQKAEGDAPREAAGE. Residues 701 to 718 are compositionally biased toward basic and acidic residues; the sequence is LEAKQKAEGDAPREAAGE.

It belongs to the polyribonucleotide nucleotidyltransferase family. Mg(2+) serves as cofactor.

The protein localises to the cytoplasm. It catalyses the reaction RNA(n+1) + phosphate = RNA(n) + a ribonucleoside 5'-diphosphate. Its function is as follows. Involved in mRNA degradation. Catalyzes the phosphorolysis of single-stranded polyribonucleotides processively in the 3'- to 5'-direction. This is Polyribonucleotide nucleotidyltransferase from Nitrobacter winogradskyi (strain ATCC 25391 / DSM 10237 / CIP 104748 / NCIMB 11846 / Nb-255).